A 290-amino-acid polypeptide reads, in one-letter code: Diaminopimelate epimerase (290 aa).

The substrate site is built by asparagine 14 and asparagine 67. The active-site Proton donor is the cysteine 76. Substrate-binding positions include 77-78, asparagine 166, asparagine 199, and 217-218; these read GN and ER. Catalysis depends on cysteine 226, which acts as the Proton acceptor. 227–228 provides a ligand contact to substrate; that stretch reads GT.

The protein belongs to the diaminopimelate epimerase family. In terms of assembly, homodimer.

The protein resides in the cytoplasm. It catalyses the reaction (2S,6S)-2,6-diaminopimelate = meso-2,6-diaminopimelate. Its pathway is amino-acid biosynthesis; L-lysine biosynthesis via DAP pathway; DL-2,6-diaminopimelate from LL-2,6-diaminopimelate: step 1/1. Functionally, catalyzes the stereoinversion of LL-2,6-diaminopimelate (L,L-DAP) to meso-diaminopimelate (meso-DAP), a precursor of L-lysine and an essential component of the bacterial peptidoglycan. This Geobacillus kaustophilus (strain HTA426) protein is Diaminopimelate epimerase.